Here is a 106-residue protein sequence, read N- to C-terminus: Large ribosomal subunit protein eL30 (106 aa).

It belongs to the eukaryotic ribosomal protein eL30 family.

This Methanococcus maripaludis (strain C7 / ATCC BAA-1331) protein is Large ribosomal subunit protein eL30.